Reading from the N-terminus, the 710-residue chain is Adenylosuccinate synthetase (710 aa).

Disordered stretches follow at residues 1-57 (MPVR…NHAK) and 82-112 (MDDE…SAQC). The span at 11-25 (NNSSSGVSNALSSSS) shows a compositional bias: low complexity. Residues 32–43 (SPSSRENSTPLS) show a composition bias toward polar residues. GTP is bound by residues 180–186 (GDEGKGK) and 210–212 (GHT). The active-site Proton acceptor is D181. Mg(2+) contacts are provided by D181 and G210. IMP is bound by residues 181-184 (DEGK), 208-211 (NAGH), T295, K309, Q421, T437, and K567. H211 functions as the Proton donor in the catalytic mechanism. 563-569 (AVTKKPR) lines the substrate pocket. GTP is bound by residues R569 and 697 to 699 (GNG).

The protein belongs to the adenylosuccinate synthetase family. Homodimer. It depends on Mg(2+) as a cofactor.

Its subcellular location is the cytoplasm. It carries out the reaction IMP + L-aspartate + GTP = N(6)-(1,2-dicarboxyethyl)-AMP + GDP + phosphate + 2 H(+). Its pathway is purine metabolism; AMP biosynthesis via de novo pathway; AMP from IMP: step 1/2. In terms of biological role, plays an important role in the salvage pathway for purine nucleotide biosynthesis. Catalyzes the first committed step in the biosynthesis of AMP from IMP. The protein is Adenylosuccinate synthetase of Leishmania braziliensis.